Reading from the N-terminus, the 307-residue chain is UDP-3-O-acyl-N-acetylglucosamine deacetylase (307 aa).

3 residues coordinate Zn(2+): histidine 78, histidine 241, and aspartate 245. The active-site Proton donor is histidine 268.

The protein belongs to the LpxC family. Requires Zn(2+) as cofactor.

It carries out the reaction a UDP-3-O-[(3R)-3-hydroxyacyl]-N-acetyl-alpha-D-glucosamine + H2O = a UDP-3-O-[(3R)-3-hydroxyacyl]-alpha-D-glucosamine + acetate. Its pathway is glycolipid biosynthesis; lipid IV(A) biosynthesis; lipid IV(A) from (3R)-3-hydroxytetradecanoyl-[acyl-carrier-protein] and UDP-N-acetyl-alpha-D-glucosamine: step 2/6. In terms of biological role, catalyzes the hydrolysis of UDP-3-O-myristoyl-N-acetylglucosamine to form UDP-3-O-myristoylglucosamine and acetate, the committed step in lipid A biosynthesis. This chain is UDP-3-O-acyl-N-acetylglucosamine deacetylase, found in Polaromonas sp. (strain JS666 / ATCC BAA-500).